We begin with the raw amino-acid sequence, 469 residues long: Type II secretion system protein HxcR (469 aa).

An ATP-binding site is contributed by 246-253 (GPTGSGKT).

The protein belongs to the GSP E family.

It localises to the cytoplasm. The catalysed reaction is ATP + H2O + cellular proteinSide 1 = ADP + phosphate + cellular proteinSide 2.. Functionally, ATPase component of the type II secretion system required for the energy-dependent secretion of extracellular factors from the periplasm. Acts as a molecular motor to provide the energy that is required for the export of proteins. The Hxc system is involved in the secretion of low-molecular-weight alkaline phosphatase L-AP (LapA). Is probably also involved in the secretion of the phosphate-binding protein PstS. The protein is Type II secretion system protein HxcR of Pseudomonas aeruginosa (strain ATCC 15692 / DSM 22644 / CIP 104116 / JCM 14847 / LMG 12228 / 1C / PRS 101 / PAO1).